A 345-amino-acid polypeptide reads, in one-letter code: Phosphoribosylformylglycinamidine cyclo-ligase (345 aa).

It belongs to the AIR synthase family.

It is found in the cytoplasm. It carries out the reaction 2-formamido-N(1)-(5-O-phospho-beta-D-ribosyl)acetamidine + ATP = 5-amino-1-(5-phospho-beta-D-ribosyl)imidazole + ADP + phosphate + H(+). The protein operates within purine metabolism; IMP biosynthesis via de novo pathway; 5-amino-1-(5-phospho-D-ribosyl)imidazole from N(2)-formyl-N(1)-(5-phospho-D-ribosyl)glycinamide: step 2/2. This is Phosphoribosylformylglycinamidine cyclo-ligase from Shewanella denitrificans (strain OS217 / ATCC BAA-1090 / DSM 15013).